A 208-amino-acid polypeptide reads, in one-letter code: Large ribosomal subunit protein uL4 (208 aa).

Residues 50 to 83 are disordered; sequence VKTRAEVSGGGRKPWKQKGTGRARQGSIRAPQWK.

The protein belongs to the universal ribosomal protein uL4 family. In terms of assembly, part of the 50S ribosomal subunit.

Its function is as follows. One of the primary rRNA binding proteins, this protein initially binds near the 5'-end of the 23S rRNA. It is important during the early stages of 50S assembly. It makes multiple contacts with different domains of the 23S rRNA in the assembled 50S subunit and ribosome. In terms of biological role, forms part of the polypeptide exit tunnel. This Mycoplasma mycoides subsp. mycoides SC (strain CCUG 32753 / NCTC 10114 / PG1) protein is Large ribosomal subunit protein uL4.